The following is a 798-amino-acid chain: Cadherin-20 (798 aa).

An N-terminal signal peptide occupies residues 1–35 (MWTSGRMSNAKNLFGLGVSLYFWGLMDLTTTVLSG). The propeptide occupies 36–58 (SARPLTEGPEDNLSDKLHQRMKR). N-linked (GlcNAc...) asparagine glycosylation is present at Asn-47. Over 59 to 618 (SWVWNQFFVL…AYVLPVSLSR (560 aa)) the chain is Extracellular. Cadherin domains follow at residues 60 to 164 (WVWN…EPKF), 165 to 273 (LDGP…PPRF), 274 to 392 (PQKH…EPSF), 389 to 493 (EPSF…APEF), and 493 to 615 (FARF…LPVS). A Cell attachment site motif is present at residues 88 to 90 (RGD). Residue Asn-260 is glycosylated (N-linked (GlcNAc...) asparagine). N-linked (GlcNAc...) asparagine glycosylation is found at Asn-419, Asn-460, and Asn-541. Residues 619-639 (GALIAILACIFVLLVLVLLIL) form a helical membrane-spanning segment. Over 640–798 (SMRRQRKQPY…GATDSSGALW (159 aa)) the chain is Cytoplasmic.

In terms of tissue distribution, detected in embryonic spinal cord, in the brachial and lumbar section of motor neurons (at protein level). Detected in ventro-lateral portion of embryonic spinal cord, in the brachial and lumbar section of embryonic motor neurons. Detected in embryonic adductor motor neurons and embryonic dorsal root ganglion. Detected in the caudal half of newly generated somites and in presomitic mesoderm.

The protein localises to the cell membrane. Cadherins are calcium-dependent cell adhesion proteins. They preferentially interact with themselves in a homophilic manner in connecting cells; cadherins may thus contribute to the sorting of heterogeneous cell types. This Gallus gallus (Chicken) protein is Cadherin-20 (CDH20).